The sequence spans 383 residues: MNAAPVPILLTQRRYARVATPENPLVLESGQRLTDVTLCYEVFGRLNPAGDNAILVCHALTGDSHVAGRYRPDDPKPGWWDDAVGPGKALDTDRYCVICSNVLGGCQGSTGPSSVNPATGRPYGLDFPLVTVRDMVRAQARLLDLLGVRRLLAVIGGSLGAMQALEWAATYPDRMRGIIPIGGAGRFHPQGIAFNEVQRQAILNDPGFLGGQYYGTPGPVRGLATARMLGMITYRSDESMWTQFGRNPQGEANPLHQGFAVAYQVESYLHYQGRKLVERFDANSYLYLTRAMDLMDLGRGRGSYEEAHARIQARVLAVGIRSDLLFPTYLQRETVELVRASGGRAEYVEMDSPWGHDAFLLDFPLIEEPIRRFLQELEAEENA.

In terms of domain architecture, AB hydrolase-1 spans 52–362 (NAILVCHALT…PWGHDAFLLD (311 aa)). The active-site Nucleophile is S158. Position 227 (R227) interacts with substrate. Active-site residues include D323 and H356. D357 serves as a coordination point for substrate.

The protein belongs to the AB hydrolase superfamily. MetX family. In terms of assembly, homodimer.

The protein resides in the cytoplasm. It carries out the reaction L-homoserine + acetyl-CoA = O-acetyl-L-homoserine + CoA. The protein operates within amino-acid biosynthesis; L-methionine biosynthesis via de novo pathway; O-acetyl-L-homoserine from L-homoserine: step 1/1. Transfers an acetyl group from acetyl-CoA to L-homoserine, forming acetyl-L-homoserine. This Symbiobacterium thermophilum (strain DSM 24528 / JCM 14929 / IAM 14863 / T) protein is Homoserine O-acetyltransferase.